A 380-amino-acid polypeptide reads, in one-letter code: Probable protein phosphatase 2C 2 (380 aa).

The PPM-type phosphatase domain occupies 122–376; that stretch reads GYSVYCKRGK…DDISVMLIQL (255 aa). 4 residues coordinate Mn(2+): Asp-158, Gly-159, Asp-321, and Asp-367.

This sequence belongs to the PP2C family. The cofactor is Mg(2+). It depends on Mn(2+) as a cofactor.

It carries out the reaction O-phospho-L-seryl-[protein] + H2O = L-seryl-[protein] + phosphate. The enzyme catalyses O-phospho-L-threonyl-[protein] + H2O = L-threonyl-[protein] + phosphate. The protein is Probable protein phosphatase 2C 2 of Arabidopsis thaliana (Mouse-ear cress).